Consider the following 275-residue polypeptide: NH(3)-dependent NAD(+) synthetase (275 aa).

ATP is bound at residue 50–57 (GISGGVDS). A Mg(2+)-binding site is contributed by aspartate 56. Arginine 147 lines the deamido-NAD(+) pocket. Position 167 (threonine 167) interacts with ATP. Glutamate 172 contacts Mg(2+). Positions 180 and 187 each coordinate deamido-NAD(+). ATP contacts are provided by lysine 196 and threonine 218. 267-268 (HK) is a binding site for deamido-NAD(+).

Belongs to the NAD synthetase family. As to quaternary structure, homodimer.

The enzyme catalyses deamido-NAD(+) + NH4(+) + ATP = AMP + diphosphate + NAD(+) + H(+). The protein operates within cofactor biosynthesis; NAD(+) biosynthesis; NAD(+) from deamido-NAD(+) (ammonia route): step 1/1. Catalyzes the ATP-dependent amidation of deamido-NAD to form NAD. Uses ammonia as a nitrogen source. This Pseudomonas aeruginosa (strain UCBPP-PA14) protein is NH(3)-dependent NAD(+) synthetase.